The sequence spans 170 residues: Crossover junction endodeoxyribonuclease RuvC (170 aa).

Residues Asp8, Glu67, and Asp139 contribute to the active site. Residues Asp8, Glu67, and Asp139 each contribute to the Mg(2+) site.

Belongs to the RuvC family. Homodimer which binds Holliday junction (HJ) DNA. The HJ becomes 2-fold symmetrical on binding to RuvC with unstacked arms; it has a different conformation from HJ DNA in complex with RuvA. In the full resolvosome a probable DNA-RuvA(4)-RuvB(12)-RuvC(2) complex forms which resolves the HJ. Mg(2+) serves as cofactor.

Its subcellular location is the cytoplasm. The enzyme catalyses Endonucleolytic cleavage at a junction such as a reciprocal single-stranded crossover between two homologous DNA duplexes (Holliday junction).. Its function is as follows. The RuvA-RuvB-RuvC complex processes Holliday junction (HJ) DNA during genetic recombination and DNA repair. Endonuclease that resolves HJ intermediates. Cleaves cruciform DNA by making single-stranded nicks across the HJ at symmetrical positions within the homologous arms, yielding a 5'-phosphate and a 3'-hydroxyl group; requires a central core of homology in the junction. The consensus cleavage sequence is 5'-(A/T)TT(C/G)-3'. Cleavage occurs on the 3'-side of the TT dinucleotide at the point of strand exchange. HJ branch migration catalyzed by RuvA-RuvB allows RuvC to scan DNA until it finds its consensus sequence, where it cleaves and resolves the cruciform DNA. The sequence is that of Crossover junction endodeoxyribonuclease RuvC from Pectobacterium atrosepticum (strain SCRI 1043 / ATCC BAA-672) (Erwinia carotovora subsp. atroseptica).